Consider the following 113-residue polypeptide: Large ribosomal subunit protein bL19 (113 aa).

Belongs to the bacterial ribosomal protein bL19 family.

In terms of biological role, this protein is located at the 30S-50S ribosomal subunit interface and may play a role in the structure and function of the aminoacyl-tRNA binding site. The protein is Large ribosomal subunit protein bL19 of Corynebacterium diphtheriae (strain ATCC 700971 / NCTC 13129 / Biotype gravis).